Consider the following 486-residue polypeptide: Transcription enhancer factor-like protein egl-44 (486 aa).

Residues 47 to 57 (GTTTPTTTSGG) are compositionally biased toward low complexity. The segment at 47-87 (GTTTPTTTSGGQMMTLSPPAGDGPGSAGSMAPESTSSLSDL) is disordered. A DNA-binding region (TEA) is located at residues 88 to 164 (SGDAEGVWSI…QVLARKKLRD (77 aa)). The segment at 165 to 188 (EQAKKKGDIPSLLQQASPPGGVKS) is disordered.

As to quaternary structure, interacts (via N-terminus) with egl-46 (via C-terminus); the interaction is direct; the interaction may regulate transcription. Interacts with yap-1 (via WW domain); the interaction may regulate transcription. Expressed in HSN neurons in embryos and in the FLP neurons from the L1 stage through to adults. Not expressed in touch cells. Also expressed in larval hypodermis, intestine, pharyngeal muscle and other neurons. In adults expression is lost from some neurons, is weaker in the hypodermis but remains in the intestine. Expressed in HOB neuron, ray neurons RnA and RnB, and the ray structural cell, Rnst; rays are male-specific genital sensilla (simple sense organs).

Its subcellular location is the nucleus. In terms of biological role, transcription factor. Binds to DNA sequence motif 5'-CATNNNNAAATGCAT-3' as a heterodimer with egl-46. Represses expression of genes involved in differentiation of touch receptor neurons (TRN), probably acting as a heterodimer with egl-46, perhaps by occupying similar cis-regulatory elements as an unc-86/mec-3 heterodimer. Plays a role in cell fate specification of neurons, including the hook neuron HOB, and touch receptor neurons. Involved in male mating behavior, acting in concert with egl-46, via modulation of expression of polycystins lov-1 and pkd-2, homeodomain protein ceh-26, and neuropeptide-like protein nlp-8. Acts upstream of egl-46 to prevent touch cell differentiation in FLP neurons. Plays a role in neuron differentiation by repressing the expression of zag-1 in FLP neurons, probably acting as a heterodimer with egl-46; because zag-1 represses expression of egl-46 and egl-44, together these proteins form a bistable, negative-feedback loop that regulates the choice between neuronal fates. Also promotes HSN neuron development. In association with egl-46, regulates cell cycle exit in the neuronal Q cell lineage. Plays a role in specifying commissural dendrites of the PVD nociceptive neurons, acting in concert with egl-46. May be involved in thermal stress response downstream of yap-1. The chain is Transcription enhancer factor-like protein egl-44 (egl-44) from Caenorhabditis elegans.